Consider the following 837-residue polypeptide: ABC transporter A family member 8 (837 aa).

7 helical membrane-spanning segments follow: residues 29–49, 244–264, 303–323, 326–346, 356–376, 393–413, and 455–475; these read YFST…FYII, VVSL…FIFL, LIIC…FFLG, FLVL…MAFF, VAIG…LTFN, GAAF…SKVL, and LAYM…IEYA. In terms of domain architecture, ABC transporter spans 516–750; sequence IRGLSKTFNK…YGEGYSVQVI (235 aa). An ATP-binding site is contributed by 553 to 560; it reads GSNGAGKS.

The protein belongs to the ABC transporter superfamily. ABCA family.

It localises to the membrane. This chain is ABC transporter A family member 8 (abcA8), found in Dictyostelium discoideum (Social amoeba).